The chain runs to 385 residues: ATP phosphoribosyltransferase regulatory subunit (385 aa).

The protein belongs to the class-II aminoacyl-tRNA synthetase family. HisZ subfamily. In terms of assembly, heteromultimer composed of HisG and HisZ subunits.

It localises to the cytoplasm. It functions in the pathway amino-acid biosynthesis; L-histidine biosynthesis; L-histidine from 5-phospho-alpha-D-ribose 1-diphosphate: step 1/9. Its function is as follows. Required for the first step of histidine biosynthesis. May allow the feedback regulation of ATP phosphoribosyltransferase activity by histidine. The sequence is that of ATP phosphoribosyltransferase regulatory subunit from Bordetella avium (strain 197N).